Reading from the N-terminus, the 333-residue chain is Protoheme IX farnesyltransferase (333 aa).

Helical transmembrane passes span 31 to 51 (VMSL…APIH), 52 to 72 (PVLA…SGAL), 115 to 135 (MFLG…TIVF), 152 to 172 (IVIG…AATG), 178 to 198 (AWLM…ALSL), 223 to 243 (KQIL…VLTG), 244 to 264 (LGGP…LLLA), and 303 to 323 (LFAF…GEAV).

It belongs to the UbiA prenyltransferase family. Protoheme IX farnesyltransferase subfamily.

The protein resides in the cell inner membrane. The enzyme catalyses heme b + (2E,6E)-farnesyl diphosphate + H2O = Fe(II)-heme o + diphosphate. The protein operates within porphyrin-containing compound metabolism; heme O biosynthesis; heme O from protoheme: step 1/1. Functionally, converts heme B (protoheme IX) to heme O by substitution of the vinyl group on carbon 2 of heme B porphyrin ring with a hydroxyethyl farnesyl side group. This chain is Protoheme IX farnesyltransferase, found in Caulobacter vibrioides (strain ATCC 19089 / CIP 103742 / CB 15) (Caulobacter crescentus).